We begin with the raw amino-acid sequence, 219 residues long: Transmembrane protein 125 (219 aa).

Transmembrane regions (helical) follow at residues 36 to 56 (LCFV…VALL), 68 to 88 (LATG…QLMS), 114 to 134 (ALVV…LAGL), and 147 to 167 (MLSV…GLLL).

It localises to the membrane. This Homo sapiens (Human) protein is Transmembrane protein 125 (TMEM125).